A 103-amino-acid polypeptide reads, in one-letter code: Putative double-stranded DNA mimic protein HD_0986 (103 aa).

The protein belongs to the putative dsDNA mimic protein family.

Its function is as follows. May act as a double-stranded DNA (dsDNA) mimic. Probably regulates the activity of a dsDNA-binding protein. This chain is Putative double-stranded DNA mimic protein HD_0986, found in Haemophilus ducreyi (strain 35000HP / ATCC 700724).